We begin with the raw amino-acid sequence, 492 residues long: Bifunctional protein GlmU (492 aa).

The pyrophosphorylase stretch occupies residues 1-241 (MTFRGDTAVV…SALVAGVNDR (241 aa)). UDP-N-acetyl-alpha-D-glucosamine-binding positions include 12 to 15 (LAAG), lysine 26, glutamine 83, and 88 to 89 (GT). Aspartate 114 lines the Mg(2+) pocket. Residues glycine 151, glutamate 166, asparagine 181, and asparagine 239 each coordinate UDP-N-acetyl-alpha-D-glucosamine. Asparagine 239 serves as a coordination point for Mg(2+). The linker stretch occupies residues 242 to 262 (VQLAQLGAELNRRIVAAHQMA). An N-acetyltransferase region spans residues 263-492 (GVTVIDPATT…TPPPDADHPP (230 aa)). Residues arginine 344 and lysine 362 each contribute to the UDP-N-acetyl-alpha-D-glucosamine site. The Proton acceptor role is filled by histidine 374. Positions 377 and 388 each coordinate UDP-N-acetyl-alpha-D-glucosamine. Residues alanine 391, 397–398 (NY), and alanine 434 contribute to the acetyl-CoA site. Positions 443 to 492 (PPGALAVSGGPQRNIEDWVQQKRPGTPSAEAARKASAEQSTPPPDADHPP) are disordered.

This sequence in the N-terminal section; belongs to the N-acetylglucosamine-1-phosphate uridyltransferase family. It in the C-terminal section; belongs to the transferase hexapeptide repeat family. In terms of assembly, homotrimer. It depends on Mg(2+) as a cofactor.

It is found in the cytoplasm. It catalyses the reaction alpha-D-glucosamine 1-phosphate + acetyl-CoA = N-acetyl-alpha-D-glucosamine 1-phosphate + CoA + H(+). The catalysed reaction is N-acetyl-alpha-D-glucosamine 1-phosphate + UTP + H(+) = UDP-N-acetyl-alpha-D-glucosamine + diphosphate. It participates in nucleotide-sugar biosynthesis; UDP-N-acetyl-alpha-D-glucosamine biosynthesis; N-acetyl-alpha-D-glucosamine 1-phosphate from alpha-D-glucosamine 6-phosphate (route II): step 2/2. Its pathway is nucleotide-sugar biosynthesis; UDP-N-acetyl-alpha-D-glucosamine biosynthesis; UDP-N-acetyl-alpha-D-glucosamine from N-acetyl-alpha-D-glucosamine 1-phosphate: step 1/1. The protein operates within bacterial outer membrane biogenesis; LPS lipid A biosynthesis. Catalyzes the last two sequential reactions in the de novo biosynthetic pathway for UDP-N-acetylglucosamine (UDP-GlcNAc). The C-terminal domain catalyzes the transfer of acetyl group from acetyl coenzyme A to glucosamine-1-phosphate (GlcN-1-P) to produce N-acetylglucosamine-1-phosphate (GlcNAc-1-P), which is converted into UDP-GlcNAc by the transfer of uridine 5-monophosphate (from uridine 5-triphosphate), a reaction catalyzed by the N-terminal domain. This is Bifunctional protein GlmU from Mycobacterium ulcerans (strain Agy99).